Consider the following 316-residue polypeptide: tRNA methyltransferase 10 homolog B (316 aa).

Positions 73–97 (EKIVAAKKSKRKQEKERRKANRAEN) form a coiled coil. The tract at residues 77-98 (AAKKSKRKQEKERRKANRAENP) is disordered. The SAM-dependent MTase TRM10-type domain maps to 113 to 310 (TKDKLLEAKH…KGVSSGKGYI (198 aa)).

This sequence belongs to the class IV-like SAM-binding methyltransferase superfamily. TRM10 family.

It carries out the reaction guanosine(9) in tRNA + S-adenosyl-L-methionine = N(1)-methylguanosine(9) in tRNA + S-adenosyl-L-homocysteine + H(+). In terms of biological role, S-adenosyl-L-methionine-dependent guanine N(1)-methyltransferase that catalyzes the formation of N(1)-methylguanine at position 9 (m1G9) in tRNAs. Probably not able to catalyze formation of N(1)-methyladenine at position 9 (m1A9) in tRNAs. The sequence is that of tRNA methyltransferase 10 homolog B (TRMT10B) from Homo sapiens (Human).